The primary structure comprises 78 residues: Esculentin-2Vb (78 aa).

A signal peptide spans 1-22; that stretch reads MFTMKKSLLLLFFLGTISLSLC. The propeptide occupies 23-39; the sequence is EEERGADEEEGDGEKLM. Cys-72 and Cys-78 are oxidised to a cystine.

Expressed by the skin glands.

The protein localises to the secreted. Functionally, antimicrobial peptide. This Odorrana versabilis (Chinese bamboo leaf odorous frog) protein is Esculentin-2Vb.